We begin with the raw amino-acid sequence, 358 residues long: MKVGVALSGGVDSAVALYLLLKEGHEVKAFHMKTKEDEFFIKKEIKKKVCCSPSDTADAMRIAHFLGVEIEIVDVKEIFREKVIEPFKRDLLKGLTPNPCAHCNRFVKFGYLMDYVLNQGFDAFASGHYARIEFSEKYGRKVIKKGVDLKKDQSYFLARIEPWRIERLIFPNGIYTKEEIRKIAEEAGIHVAKKQESQDVCFIPDGSIENFLKDEGITLKDGDIITPEGEVVGRHFGYPLYTIGQRKGFKIEKFGRRYYVRGKIPEKNVVVVSDLEDVFFSGLIAEDPVWHVEVPEEFRCVCRVRKKSEEAPAVVKVKDNEVEVSFEKKVFAVTPGQIAAFYDGDTLLGGAIIKEGIR.

Residues 6–13 and M32 contribute to the ATP site; that span reads ALSGGVDS. The active-site Nucleophile is C103. C103 and C201 are disulfide-bonded. Position 127 (G127) interacts with ATP. The interval 151 to 153 is interaction with tRNA; sequence KDQ. Residue C201 is the Cysteine persulfide intermediate of the active site.

Belongs to the MnmA/TRMU family.

It is found in the cytoplasm. The enzyme catalyses S-sulfanyl-L-cysteinyl-[protein] + uridine(34) in tRNA + AH2 + ATP = 2-thiouridine(34) in tRNA + L-cysteinyl-[protein] + A + AMP + diphosphate + H(+). In terms of biological role, catalyzes the 2-thiolation of uridine at the wobble position (U34) of tRNA, leading to the formation of s(2)U34. This chain is tRNA-specific 2-thiouridylase MnmA, found in Thermotoga maritima (strain ATCC 43589 / DSM 3109 / JCM 10099 / NBRC 100826 / MSB8).